Here is a 1270-residue protein sequence, read N- to C-terminus: ATP-dependent helicase/nuclease subunit A (1270 aa).

Residues T3–R476 form the UvrD-like helicase ATP-binding domain. Position 24-31 (A24–T31) interacts with ATP. One can recognise a UvrD-like helicase C-terminal domain in the interval I528–G823.

Belongs to the helicase family. AddA subfamily. Heterodimer of AddA and AddB/RexB. The cofactor is Mg(2+).

The catalysed reaction is Couples ATP hydrolysis with the unwinding of duplex DNA by translocating in the 3'-5' direction.. It carries out the reaction ATP + H2O = ADP + phosphate + H(+). The heterodimer acts as both an ATP-dependent DNA helicase and an ATP-dependent, dual-direction single-stranded exonuclease. Recognizes the chi site generating a DNA molecule suitable for the initiation of homologous recombination. The AddA nuclease domain is required for chi fragment generation; this subunit has the helicase and 3' -&gt; 5' nuclease activities. This is ATP-dependent helicase/nuclease subunit A from Clostridium perfringens (strain SM101 / Type A).